The primary structure comprises 388 residues: Galactokinase (388 aa).

33–36 (EHTD) provides a ligand contact to substrate. ATP-binding positions include S67 and 124 to 130 (GAGLSSS). 2 residues coordinate Mg(2+): S130 and E162. D174 (proton acceptor) is an active-site residue. Y224 contacts substrate.

It belongs to the GHMP kinase family. GalK subfamily.

Its subcellular location is the cytoplasm. The enzyme catalyses alpha-D-galactose + ATP = alpha-D-galactose 1-phosphate + ADP + H(+). It functions in the pathway carbohydrate metabolism; galactose metabolism. In terms of biological role, catalyzes the transfer of the gamma-phosphate of ATP to D-galactose to form alpha-D-galactose-1-phosphate (Gal-1-P). This is Galactokinase from Lacticaseibacillus casei (strain BL23) (Lactobacillus casei).